Here is a 485-residue protein sequence, read N- to C-terminus: Glycogen synthase (485 aa).

Residue lysine 15 participates in ADP-alpha-D-glucose binding.

Belongs to the glycosyltransferase 1 family. Bacterial/plant glycogen synthase subfamily.

The enzyme catalyses [(1-&gt;4)-alpha-D-glucosyl](n) + ADP-alpha-D-glucose = [(1-&gt;4)-alpha-D-glucosyl](n+1) + ADP + H(+). It functions in the pathway glycan biosynthesis; glycogen biosynthesis. Its function is as follows. Synthesizes alpha-1,4-glucan chains using ADP-glucose. The polypeptide is Glycogen synthase (Francisella philomiragia subsp. philomiragia (strain ATCC 25017 / CCUG 19701 / FSC 153 / O#319-036)).